The primary structure comprises 424 residues: Gamma-glutamyl phosphate reductase (424 aa).

It belongs to the gamma-glutamyl phosphate reductase family.

Its subcellular location is the cytoplasm. The catalysed reaction is L-glutamate 5-semialdehyde + phosphate + NADP(+) = L-glutamyl 5-phosphate + NADPH + H(+). The protein operates within amino-acid biosynthesis; L-proline biosynthesis; L-glutamate 5-semialdehyde from L-glutamate: step 2/2. In terms of biological role, catalyzes the NADPH-dependent reduction of L-glutamate 5-phosphate into L-glutamate 5-semialdehyde and phosphate. The product spontaneously undergoes cyclization to form 1-pyrroline-5-carboxylate. This Dehalococcoides mccartyi (strain ATCC BAA-2100 / JCM 16839 / KCTC 5957 / BAV1) protein is Gamma-glutamyl phosphate reductase.